Consider the following 534-residue polypeptide: Prolyl 4-hydroxylase subunit alpha-1 (534 aa).

The signal sequence occupies residues 1–17 (MIWYILVVGILLPQSLA). N-linked (GlcNAc...) asparagine glycosylation is present at N113. The TPR repeat unit spans residues 205-238 (VSVLDYLSYAVYQQGDLDKALLLTKKLLELDPEH). Residues 258–277 (ANKSSSDDQSDQKTTLKKKG) form a disordered region. N-linked (GlcNAc...) asparagine glycosylation is present at N259. Positions 411-519 (TAEELQVANY…KWVSNKWLHE (109 aa)) constitute a Fe2OG dioxygenase domain. 3 residues coordinate Fe cation: H429, D431, and H500. Position 510 (K510) interacts with 2-oxoglutarate.

The protein belongs to the P4HA family. Heterotetramer of two alpha-1 chains and two beta chains (P4HB)(the beta chain is the multi-functional PDI), where P4HB plays the role of a structural subunit; this tetramer catalyzes the formation of 4-hydroxyproline in collagen. It depends on Fe(2+) as a cofactor. The cofactor is L-ascorbate.

It is found in the endoplasmic reticulum lumen. It catalyses the reaction L-prolyl-[collagen] + 2-oxoglutarate + O2 = trans-4-hydroxy-L-prolyl-[collagen] + succinate + CO2. Its function is as follows. Catalyzes the post-translational formation of 4-hydroxyproline in -Xaa-Pro-Gly- sequences in collagens and other proteins. The polypeptide is Prolyl 4-hydroxylase subunit alpha-1 (P4HA1) (Bos taurus (Bovine)).